A 296-amino-acid polypeptide reads, in one-letter code: POM121-like protein 12 (296 aa).

Disordered stretches follow at residues 1 to 54 (MGAA…SPWP) and 142 to 162 (APPERQESPWRSPGQRARPAG). A compositionally biased stretch (low complexity) spans 34–52 (SRSPSTPQTTPSPQGRQSP).

It belongs to the POM121 family.

This is POM121-like protein 12 (POM121L12) from Homo sapiens (Human).